Here is a 94-residue protein sequence, read N- to C-terminus: Co-chaperonin GroES (94 aa).

It belongs to the GroES chaperonin family. In terms of assembly, heptamer of 7 subunits arranged in a ring. Interacts with the chaperonin GroEL.

The protein resides in the cytoplasm. Together with the chaperonin GroEL, plays an essential role in assisting protein folding. The GroEL-GroES system forms a nano-cage that allows encapsulation of the non-native substrate proteins and provides a physical environment optimized to promote and accelerate protein folding. GroES binds to the apical surface of the GroEL ring, thereby capping the opening of the GroEL channel. The chain is Co-chaperonin GroES from Listeria welshimeri serovar 6b (strain ATCC 35897 / DSM 20650 / CCUG 15529 / CIP 8149 / NCTC 11857 / SLCC 5334 / V8).